The following is a 434-amino-acid chain: Phosphomethylpyrimidine synthase 2 (434 aa).

Residues methionine 94, tyrosine 123, histidine 162, 184 to 186, 225 to 228, and glutamate 264 contribute to the substrate site; these read SRG and NAMR. Histidine 268 is a binding site for Zn(2+). Tyrosine 291 is a substrate binding site. Residue histidine 332 coordinates Zn(2+). Residues cysteine 408, cysteine 411, and cysteine 415 each contribute to the [4Fe-4S] cluster site.

It belongs to the ThiC family. [4Fe-4S] cluster is required as a cofactor.

The enzyme catalyses 5-amino-1-(5-phospho-beta-D-ribosyl)imidazole + S-adenosyl-L-methionine = 4-amino-2-methyl-5-(phosphooxymethyl)pyrimidine + CO + 5'-deoxyadenosine + formate + L-methionine + 3 H(+). Its pathway is cofactor biosynthesis; thiamine diphosphate biosynthesis. Its function is as follows. Catalyzes the synthesis of the hydroxymethylpyrimidine phosphate (HMP-P) moiety of thiamine from aminoimidazole ribotide (AIR) in a radical S-adenosyl-L-methionine (SAM)-dependent reaction. The polypeptide is Phosphomethylpyrimidine synthase 2 (Methanosphaera stadtmanae (strain ATCC 43021 / DSM 3091 / JCM 11832 / MCB-3)).